A 1165-amino-acid chain; its full sequence is MALRFILGRAGTGKTRLCLEEIRKELRQAPDGPPLVFLVPEQATFQTEYALALTPGLSGMFRAQVLSFRRLAWRVFSEVGGAARPHVGDVGKRMMLARILARRRNELRLFGRAAGQYGFSGTLAGVLSELKTYLVTPEALEQAVRMLPGTAETDSLQAKLEDLRLLYTDFERELAGKYIDPDDYLTLLAARLGESPTLRAAEVWVDGFAGFTPQEYAVLEALLKAAARVNVALCLDPRSGRREDLELFQVTRDTRARLAELARKNGVELERPVELAGPPARFRANPALAHLEREFFRRPTKKFAGPPENLRLVAAASRRAEVEGAAREILRLSRERGWRWRDVSLVVRNLADYHELVATVFADYGIPCFIDRKRPVRHHPLVELIRSALETVTENWTYDPVFRYLKTDLVPVSRGDVDLLENYVLAHGIKGAKWADPEDWHYRRSDALNRPVPNGTGAPAPSDRDRYLREKVNRIRRRAARHLLDFQRRVQAAGTVRELTAALYDLLSDLDVPGRIEEWSREAETEGRLEAAREHRQLWDGVVELLDQVVETLGDEALTPEEYGRILDSGMDGLQLALIPPALDQVLVGSLERSRNPDIRAAFVLGVSEGVLPGRHGGTGLFTDREREVLLAAGLEVAPDTRRKVYEEQYLVYIALTRAGHYLWVSYPLADEEGGALAPSSVIPRLRELFPGLREETLALEPEGTAPGADLPYVTAPGRTLGFLVTRLRDWKSGVTVDPVWWSVFNWFAAHAGWRERCAPVLAGLFYENREPRLDPELTPELYGSRLVVSVSRLEEFRGCPFAHFARYALRLKERDVCRLAAPDIGLFFHAALKTFEDRLREAGMEWDALESADCTRLASAVVEELAPQLQSEVLLSSPRLRFLTGKLERVVERTAGVMAAHARHSRFQPVAVEVAFGPGRDVPGPAYPLPGGGSVELAGRIDRVDVAHTDNAAYLRVIDYKAGPRSLALDDVYYGLNLQLLVYLEAGLREAAALAGRECRPAGAFYFRVQNPLLKGGTPVPPAEVAPRLLKAFRLQGLVLDDPALLRLMDDAIGSESAIVPAGLKQDGTVKKKPGVVSAAQLERLQEHVRRVVAETAAEIQAGVVAIAPYRKGQANACRYCAFKPVCAFDPLLESNRYRQLRALTAGELWRLLGLPEEDEPGDE.

In terms of domain architecture, UvrD-like helicase ATP-binding spans 1 to 298 (MALRFILGRA…AHLEREFFRR (298 aa)). Position 8 to 15 (8 to 15 (GRAGTGKT)) interacts with ATP. The UvrD-like helicase C-terminal domain occupies 279–584 (PARFRANPAL…QLALIPPALD (306 aa)). [4Fe-4S] cluster contacts are provided by Cys800, Cys1119, Cys1122, and Cys1128.

It belongs to the helicase family. AddB/RexB type 1 subfamily. Heterodimer of AddA and AddB. Mg(2+) serves as cofactor. [4Fe-4S] cluster is required as a cofactor.

Its function is as follows. The heterodimer acts as both an ATP-dependent DNA helicase and an ATP-dependent, dual-direction single-stranded exonuclease. Recognizes the chi site generating a DNA molecule suitable for the initiation of homologous recombination. The AddB subunit has 5' -&gt; 3' nuclease activity but not helicase activity. The protein is ATP-dependent helicase/deoxyribonuclease subunit B of Desulforudis audaxviator (strain MP104C).